The chain runs to 254 residues: Tubulin-specific chaperone B (254 aa).

A CAP-Gly domain is found at 182 to 225 (PLPLDVMGTWCGVEFPEAAGKNDGRINGVTLFGPVAPGHGSFVR). The disordered stretch occupies residues 234 to 254 (KDEESAEVEDVHDDVESDDEI). The segment covering 237 to 254 (ESAEVEDVHDDVESDDEI) has biased composition (acidic residues).

This sequence belongs to the TBCB family. As to quaternary structure, binds to monomeric alpha-tubulin.

The protein localises to the cytoplasm. It is found in the cytoskeleton. Acts to sequester alpha-tubulin from interaction with beta-tubulin, raising the possibility that it plays a regulatory role in the formation of the tubulin heterodimer. The sequence is that of Tubulin-specific chaperone B (ALF1) from Saccharomyces cerevisiae (strain ATCC 204508 / S288c) (Baker's yeast).